The following is a 96-amino-acid chain: Protein Vpr (96 aa).

The segment at 1–42 is homooligomerization; sequence MEQAPEDQGPQREPYHEWTLELLEELKNEAVRHFPRPWLHGL. Ser79, Ser94, and Ser96 each carry phosphoserine; by host.

It belongs to the HIV-1 VPR protein family. Homooligomer, may form homodimer. Interacts with p6-gag region of the Pr55 Gag precursor protein through a (Leu-X-X)4 motif near the C-terminus of the P6gag protein. Interacts with host UNG. May interact with host RAD23A/HHR23A. Interacts with host VPRBP/DCAF1, leading to hijack the CUL4A-RBX1-DDB1-DCAF1/VPRBP complex, mediating ubiquitination of host proteins such as TERT and ZGPAT and arrest of the cell cycle in G2 phase. Phosphorylated on several residues by host. These phosphorylations regulate VPR activity for the nuclear import of the HIV-1 pre-integration complex.

It localises to the virion. It is found in the host nucleus. Its subcellular location is the host extracellular space. Its function is as follows. During virus replication, may deplete host UNG protein, and incude G2-M cell cycle arrest. Acts by targeting specific host proteins for degradation by the 26S proteasome, through association with the cellular CUL4A-DDB1 E3 ligase complex by direct interaction with host VPRPB/DCAF-1. Cell cycle arrest reportedly occurs within hours of infection and is not blocked by antiviral agents, suggesting that it is initiated by the VPR carried into the virion. Additionally, VPR induces apoptosis in a cell cycle dependent manner suggesting that these two effects are mechanistically linked. Detected in the serum and cerebrospinal fluid of AIDS patient, VPR may also induce cell death to bystander cells. Functionally, during virus entry, plays a role in the transport of the viral pre-integration (PIC) complex to the host nucleus. This function is crucial for viral infection of non-dividing macrophages. May act directly at the nuclear pore complex, by binding nucleoporins phenylalanine-glycine (FG)-repeat regions. This Homo sapiens (Human) protein is Protein Vpr.